The primary structure comprises 396 residues: MTKSEDIIKKTEHYGAPNYKPLPIVISEAEGIWITDPEGNKYMDMLAAYSAVNQGHRHPKVIEALKEQADKVTLVSRAFNSDNLGDWYEKVSELTGKEKVLPMNTGAEAVETAVKAARRWAYEHKDIEPDKAEIIAFNGNFHGRTMAPVSLSSEAEYQRGYGPLLEGFLKVDFGDVDQLKDAINENTAAILVEPIQGEAGINVPPEGYLKEIRKLADENNILFIADEIQSGLGRSGKTFATDWDGVKLDVYILGKALGGGVLPISAVAADSEVLDVFTPGSHGSTFGGNPLAAAVSIAALDVLEDEKLAERSRELGEYFQDELKKIDNPVIKEVRGRGLFIGVELNEDARPYAEALKEEGLLCKETHDTVIRFAPPLIITKEEIDDALERIKKVFS.

At Lys255 the chain carries N6-(pyridoxal phosphate)lysine.

It belongs to the class-III pyridoxal-phosphate-dependent aminotransferase family. OAT subfamily. Pyridoxal 5'-phosphate serves as cofactor.

The protein resides in the cytoplasm. The catalysed reaction is a 2-oxocarboxylate + L-ornithine = L-glutamate 5-semialdehyde + an L-alpha-amino acid. Its pathway is amino-acid biosynthesis; L-proline biosynthesis; L-glutamate 5-semialdehyde from L-ornithine: step 1/1. Catalyzes the interconversion of ornithine to glutamate semialdehyde. This chain is Ornithine aminotransferase, found in Staphylococcus carnosus (strain TM300).